An 824-amino-acid chain; its full sequence is Leucine--tRNA ligase (824 aa).

Positions Pro-42–His-52 match the 'HIGH' region motif. The short motif at Lys-581 to Ser-585 is the 'KMSKS' region element. Lys-584 is an ATP binding site.

This sequence belongs to the class-I aminoacyl-tRNA synthetase family.

The protein resides in the cytoplasm. It catalyses the reaction tRNA(Leu) + L-leucine + ATP = L-leucyl-tRNA(Leu) + AMP + diphosphate. The chain is Leucine--tRNA ligase from Geobacter sp. (strain M21).